Here is an 81-residue protein sequence, read N- to C-terminus: GTVFFDQDSPDSPVKVTGEVTGLQKHGFHIHEFGDNTNMSADGSSYLQVSGSKLTQEGQASMEVKGNAGARVAXGVVGIAK.

In terms of assembly, heterodimer of burs and pburs. As to expression, central nervous system. Coexpressed with CCAP in most CCAP-specific neurons. Coexpressed with pburs in the large bilateral lateral neurosecretory neurons of the first three unfused abdominal ganglia and in all anterior bilateral cell pairs in the thoracic ganglia.

It localises to the secreted. Final heterodimeric neurohormone released at the end of the molting cycle, involved in the sclerotization (tanning) of the insect cuticle, melanization and wing spreading. The sequence is that of Bursicon (burs) from Periplaneta americana (American cockroach).